The sequence spans 365 residues: sn-glycerol-3-phosphate import ATP-binding protein UgpC (365 aa).

Residues 4 to 234 (LSLRNVQKHY…PASTFVAGFI (231 aa)) enclose the ABC transporter domain. Position 36-43 (36-43 (GPSGCGKS)) interacts with ATP.

It belongs to the ABC transporter superfamily. sn-glycerol-3-phosphate importer (TC 3.A.1.1.3) family. In terms of assembly, the complex is composed of two ATP-binding proteins (UgpC), two transmembrane proteins (UgpA and UgpE) and a solute-binding protein (UgpB).

Its subcellular location is the cell inner membrane. The catalysed reaction is sn-glycerol 3-phosphate(out) + ATP + H2O = sn-glycerol 3-phosphate(in) + ADP + phosphate + H(+). In terms of biological role, part of the ABC transporter complex UgpBAEC involved in sn-glycerol-3-phosphate (G3P) import. Responsible for energy coupling to the transport system. This is sn-glycerol-3-phosphate import ATP-binding protein UgpC from Ralstonia nicotianae (strain ATCC BAA-1114 / GMI1000) (Ralstonia solanacearum).